The chain runs to 733 residues: MSLKNEEQNDLSPKDSVKGNDQYRAPSGIHLEREEESRNDFWQFEPSNLFRHPRIHLEPQEKSDNNFKKFVIKKLEKSCQCSSTKAKNTIFGFLPVLQWLPKYDLKKNILGDVMSGLIVGILLVPQSIAYSLLAGQEPIYGLYTSFFASLIYFILGTSRHISVGIFGILCLMIGEVVDRELYIAGYDAVHAASNESSLVNQMPDKTCDRSCYAIIVGSTVTFVAGVYQVAMGFFQVGFVSVYLSDALLGGFVTGASFTILTSQVKYLLGLSLPRSAGVGSLITTWIHVFRNIHKTNICDLITSLLCLLVLLPTKELNERFKSKLKAPIPVELFVVVAATLASHFGKLNEKYGTSIAGHIPTGFMPPEAPDWNLIPRVAIDAIAIAIIGFAITVSLSEMFAKKHGYTVKANQEMYAIGFCNIIPSFFHCFTTSAALAKTLVKESTGCQTQVSGVMTALVLLLVLLVIAPLFFSLQKSVLGVITIVNLRGALCKFKDLPQMWRISRMDTVIWFVTMLSSALISTEIGLLTGVCFSMFCVILRTQKPKASLLGLVEDSEVFESMSAYKNLQAKSGIKIFRFVAPLYYVNKEYFKSVLYKKTLNPVLVKAAQRKAAKRKIKRETVTPSGIQDEVSVQLSHDPLEFHTIVIDCSAIQFLDTAGIHTLKEVRRDYEAIGIQVLLAQCNPSVRTPGRGEYCKKDEENLLFYSVYEAMTFAEDSQNQKETYVPNGPNFSSD.

A compositionally biased stretch (basic and acidic residues) spans Met-1–Lys-18. Positions Met-1–Ser-37 are disordered. A phosphoserine mark is found at Ser-12 and Ser-16. The next 2 helical transmembrane spans lie at Val-113–Leu-133 and Pro-138–Ser-158. N-linked (GlcNAc...) asparagine glycosylation occurs at Asn-194. 6 helical membrane-spanning segments follow: residues Ile-214–Phe-234, Gly-237–Phe-257, Ile-379–Phe-399, Ala-415–Leu-435, Val-453–Leu-473, and Leu-519–Leu-539. Residues Ala-563 to Glu-714 enclose the STAS domain.

The protein belongs to the SLC26A/SulP transporter (TC 2.A.53) family. N-glycosylated.

Its subcellular location is the cell membrane. It is found in the apical cell membrane. It catalyses the reaction oxalate(in) + sulfate(out) = oxalate(out) + sulfate(in). The catalysed reaction is sulfate(out) + 2 chloride(in) = sulfate(in) + 2 chloride(out). The enzyme catalyses oxalate(out) + 2 chloride(in) = oxalate(in) + 2 chloride(out). It carries out the reaction bromide(in) + chloride(out) = bromide(out) + chloride(in). It catalyses the reaction nitrate(in) + chloride(out) = nitrate(out) + chloride(in). The catalysed reaction is iodide(in) + chloride(out) = iodide(out) + chloride(in). Functionally, sulfate transporter which mediates sulfate uptake into chondrocytes in order to maintain adequate sulfation of proteoglycans which is needed for cartilage development. Mediates electroneutral anion exchange of sulfate ions for oxalate ions, sulfate and oxalate ions for chloride and/or hydroxyl ions and chloride ions for bromide, iodide and nitrate ions. The coupling of sulfate transport to both hydroxyl and chloride ions likely serves to ensure transport at both acidic pH when most sulfate uptake is mediated by sulfate-hydroxide exchange and alkaline pH when most sulfate uptake is mediated by sulfate-chloride exchange. Essential for chondrocyte proliferation, differentiation and cell size expansion. The polypeptide is Sulfate transporter (SLC26A2) (Bubalus bubalis (Domestic water buffalo)).